The primary structure comprises 1657 residues: Thrombospondin type-1 domain-containing protein 7A (1657 aa).

An N-terminal signal peptide occupies residues 1–47 (MGLQARRWASGSRGAAGPRRGVLQLLPLPLPLPLLLLLLLRPGAGRA). Residues 48–1607 (AAQGEAEAPT…FGPDGRLKTW (1560 aa)) lie on the Extracellular side of the membrane. 3 consecutive TSP type-1 domains span residues 57–116 (TLYL…KVCD), 120–192 (ELYD…IPCQ), and 194–247 (DCIV…SPCE). N-linked (GlcNAc...) asparagine glycosylation occurs at asparagine 234. The interval 265–311 (MPHSRQVRQARRRGKNKEREKDRSKGVKDPEARELIKKKRNRNRQNR) is disordered. Positions 267-315 (HSRQVRQARRRGKNKEREKDRSKGVKDPEARELIKKKRNRNRQNRQENK) form a coiled coil. Positions 269–280 (RQVRQARRRGKN) are enriched in basic residues. The span at 281–299 (KEREKDRSKGVKDPEAREL) shows a compositional bias: basic and acidic residues. The span at 300–309 (IKKKRNRNRQ) shows a compositional bias: basic residues. Asparagine 332 carries N-linked (GlcNAc...) asparagine glycosylation. TSP type-1 domains follow at residues 360 to 416 (ECQV…LSQG), 423 to 510 (ATYG…IPCP), 512 to 574 (ECEV…PACY), 634 to 695 (DCVL…HPCT), 696 to 769 (VYHW…LPCK), 771 to 831 (DCIV…QACQ), 832 to 904 (SYRW…IPCQ), 906 to 959 (DCQL…CPCD), 960 to 1033 (KYNA…IPCP), 1035 to 1095 (DCKL…SDCN), 1096 to 1163 (QYLW…LPCP), 1166 to 1220 (CVIS…KNCY), 1221 to 1284 (HYDY…VECP), 1286 to 1341 (NCQL…KPCY), 1342 to 1412 (RWQY…QPCP), and 1414 to 1475 (DCYL…GQCY). Cystine bridges form between cysteine 435–cysteine 505, cysteine 455–cysteine 509, and cysteine 466–cysteine 494. An N-linked (GlcNAc...) asparagine glycan is attached at asparagine 450. Residue asparagine 500 is glycosylated (N-linked (GlcNAc...) asparagine). Disulfide bonds link cysteine 635-cysteine 677 and cysteine 646-cysteine 650. Residue asparagine 679 is glycosylated (N-linked (GlcNAc...) asparagine). 7 disulfides stabilise this stretch: cysteine 689–cysteine 694, cysteine 707–cysteine 764, cysteine 728–cysteine 768, cysteine 739–cysteine 752, cysteine 772–cysteine 814, cysteine 783–cysteine 787, and cysteine 824–cysteine 830. N-linked (GlcNAc...) asparagine glycosylation is present at asparagine 717. An N-linked (GlcNAc...) asparagine glycan is attached at asparagine 968. Intrachain disulfides connect cysteine 972-cysteine 1028, cysteine 994-cysteine 1032, cysteine 1005-cysteine 1018, cysteine 1036-cysteine 1073, cysteine 1047-cysteine 1051, and cysteine 1090-cysteine 1094. N-linked (GlcNAc...) asparagine glycosylation is present at asparagine 1043. Residue asparagine 1182 is glycosylated (N-linked (GlcNAc...) asparagine). Cysteine 1213 and cysteine 1219 are joined by a disulfide. N-linked (GlcNAc...) asparagine glycosylation occurs at asparagine 1225. 12 disulfide bridges follow: cysteine 1232–cysteine 1279, cysteine 1240–cysteine 1283, cysteine 1251–cysteine 1264, cysteine 1287–cysteine 1325, cysteine 1298–cysteine 1302, cysteine 1335–cysteine 1340, cysteine 1351–cysteine 1407, cysteine 1358–cysteine 1411, cysteine 1369–cysteine 1388, cysteine 1415–cysteine 1459, cysteine 1426–cysteine 1430, and cysteine 1469–cysteine 1474. Asparagine 1276 carries an N-linked (GlcNAc...) asparagine glycan. A glycan (N-linked (GlcNAc...) asparagine) is linked at asparagine 1366. Residues asparagine 1500 and asparagine 1547 are each glycosylated (N-linked (GlcNAc...) asparagine). A disordered region spans residues 1570 to 1591 (DVKTSRAVHPTQPSSNPAGRGR). A helical transmembrane segment spans residues 1608-1628 (VYGVAAGAFVLLIFIVSMIYL). Topologically, residues 1629–1657 (ACKKPKKPQRRQNNRLKPLTLAYDGDADM) are cytoplasmic.

In terms of processing, proteolytic cleavage in the extracellular region generates a 210 kDa soluble form. Extensively N-glycosylated. Detected on kidney podocytes along the glomerular capillary wall (at protein level).

It localises to the cell membrane. Its subcellular location is the cell projection. It is found in the secreted. In terms of biological role, plays a role in actin cytoskeleton rearrangement. Its function is as follows. The soluble form promotes endothelial cell migration and filopodia formation during sprouting angiogenesis via a FAK-dependent mechanism. The sequence is that of Thrombospondin type-1 domain-containing protein 7A (THSD7A) from Homo sapiens (Human).